Here is a 378-residue protein sequence, read N- to C-terminus: MQLPSFLEVYEGLISTSSISSTDPSWDQGNAKVIEKLASWFKDLGFSVEVIEVEPGKHNMIARMGEGEGGLLLAGHSDTVPFDEGRWSFDPHKLTEKDNRFYGLGTADMKGFFAFIYEAVKKIDWSKQTKPLYVLATCDEETTMLGARHFTENAPFKPDYCIIGEPTSLVPIRGHKGHVANAIRVTGKSGHSSDPALGVNAIEIMHEVMFAMMQLRDKLVKEYHHPGFAIPSPTLNLGHIHGGDSANRICGCCELHYDVRPLPGISLDGLENMLRGALKEVEAKWPGRLEIIPLHDPIPGYECQHDHPFIGGVEEICQTSSETVNYCTEAPFLQQLCPTLVLGPGSIDQAHQPDEFLSFDFIDPTIDVLSRAMVKYCC.

Zn(2+) is bound at residue His76. Asp78 is a catalytic residue. Residue Asp108 participates in Zn(2+) binding. The active site involves Glu140. Positions 141, 165, and 351 each coordinate Zn(2+).

The protein belongs to the peptidase M20A family. ArgE subfamily. Homodimer. It depends on Zn(2+) as a cofactor. Co(2+) serves as cofactor. Glutathione is required as a cofactor.

It localises to the cytoplasm. The catalysed reaction is N(2)-acetyl-L-ornithine + H2O = L-ornithine + acetate. The protein operates within amino-acid biosynthesis; L-arginine biosynthesis; L-ornithine from N(2)-acetyl-L-ornithine (linear): step 1/1. Its function is as follows. Catalyzes the hydrolysis of the amide bond of N(2)-acetylated L-amino acids. Cleaves the acetyl group from N-acetyl-L-ornithine to form L-ornithine, an intermediate in L-arginine biosynthesis pathway, and a branchpoint in the synthesis of polyamines. The sequence is that of Acetylornithine deacetylase from Vibrio campbellii (strain ATCC BAA-1116).